The primary structure comprises 533 residues: Multicopy suppressor of sporulation protein msa1 (533 aa).

The interval 30 to 68 is disordered; that stretch reads DIPPGSLSENDNSTTFIKPPLETASSSTPIPSSSSSGVL. The segment covering 36–45 has biased composition (polar residues); it reads LSENDNSTTF. A compositionally biased stretch (low complexity) spans 54 to 68; it reads SSSTPIPSSSSSGVL. An RRM 1 domain is found at 79–158; it reads ACLFVASLNS…RHIRIERAKV (80 aa). The segment at 237–292 is disordered; that stretch reads YKKKGSSPFSPPNAHSRRRKSQGKDQSNTPVIKAPAPIPFSVSSDPPSTMGRSNSA. Residues 277–292 are compositionally biased toward polar residues; sequence SVSSDPPSTMGRSNSA. The region spanning 365-441 is the RRM 2 domain; that stretch reads YSIFVGQLDP…KPLRVEFRQL (77 aa).

Its subcellular location is the cytoplasm. Functionally, negative regulator of sexual differentiation. Acts by repressing the transcription of meiosis-inducing, ste11-regulated genes. In Schizosaccharomyces pombe (strain 972 / ATCC 24843) (Fission yeast), this protein is Multicopy suppressor of sporulation protein msa1 (msa1).